The sequence spans 376 residues: UPF0754 membrane protein Sca_1420 (376 aa).

2 helical membrane-spanning segments follow: residues 4 to 24 (FLVI…TNII) and 356 to 376 (LLGF…ALFV).

The protein belongs to the UPF0754 family.

It is found in the cell membrane. In Staphylococcus carnosus (strain TM300), this protein is UPF0754 membrane protein Sca_1420.